The primary structure comprises 197 residues: Holliday junction branch migration complex subunit RuvA (197 aa).

Residues 1–64 (MIARLAGKVA…QDAIELYGFA (64 aa)) are domain I. Residues 65-141 (SEDEEAVFRA…LALLARAAGP (77 aa)) form a domain II region. Positions 141–145 (PARAK) are flexible linker. The segment at 146-197 (PGAGVVEQLRQALVNLGYKPPQADAAADALRDEAEGKKLDELLREALKRLRG) is domain III.

Belongs to the RuvA family. In terms of assembly, homotetramer. Forms an RuvA(8)-RuvB(12)-Holliday junction (HJ) complex. HJ DNA is sandwiched between 2 RuvA tetramers; dsDNA enters through RuvA and exits via RuvB. An RuvB hexamer assembles on each DNA strand where it exits the tetramer. Each RuvB hexamer is contacted by two RuvA subunits (via domain III) on 2 adjacent RuvB subunits; this complex drives branch migration. In the full resolvosome a probable DNA-RuvA(4)-RuvB(12)-RuvC(2) complex forms which resolves the HJ.

It is found in the cytoplasm. Functionally, the RuvA-RuvB-RuvC complex processes Holliday junction (HJ) DNA during genetic recombination and DNA repair, while the RuvA-RuvB complex plays an important role in the rescue of blocked DNA replication forks via replication fork reversal (RFR). RuvA specifically binds to HJ cruciform DNA, conferring on it an open structure. The RuvB hexamer acts as an ATP-dependent pump, pulling dsDNA into and through the RuvAB complex. HJ branch migration allows RuvC to scan DNA until it finds its consensus sequence, where it cleaves and resolves the cruciform DNA. The protein is Holliday junction branch migration complex subunit RuvA of Anaeromyxobacter sp. (strain Fw109-5).